Reading from the N-terminus, the 590-residue chain is Aspartate--tRNA ligase (590 aa).

Glu-172 provides a ligand contact to L-aspartate. The interval 196-199 (QLFK) is aspartate. Position 218 (Arg-218) interacts with L-aspartate. ATP contacts are provided by residues 218-220 (RDE) and Gln-227. His-449 contributes to the L-aspartate binding site. ATP is bound at residue Glu-483. An L-aspartate-binding site is contributed by Arg-490. 535–538 (GLDR) contacts ATP.

Belongs to the class-II aminoacyl-tRNA synthetase family. Type 1 subfamily. As to quaternary structure, homodimer.

It is found in the cytoplasm. The catalysed reaction is tRNA(Asp) + L-aspartate + ATP = L-aspartyl-tRNA(Asp) + AMP + diphosphate. Its function is as follows. Catalyzes the attachment of L-aspartate to tRNA(Asp) in a two-step reaction: L-aspartate is first activated by ATP to form Asp-AMP and then transferred to the acceptor end of tRNA(Asp). This Glaesserella parasuis serovar 5 (strain SH0165) (Haemophilus parasuis) protein is Aspartate--tRNA ligase.